Reading from the N-terminus, the 314-residue chain is Glucocorticoid receptor (314 aa).

The segment at 1-44 is disordered; the sequence is ASAAVSAAPTEKEFPKTHSDVSSEQQNLKGQKGSNGGSMKLHTT. Residues 1–281 form a modulating region; the sequence is ASAAVSAAPT…SAATGPPPKL (281 aa). Residues 10 to 21 are compositionally biased toward basic and acidic residues; it reads TEKEFPKTHSDV. Residues S65, S73, and S88 each carry the phosphoserine modification. A Glycyl lysine isopeptide (Lys-Gly) (interchain with G-Cter in SUMO2) cross-link involves residue K120. S129 carries the post-translational modification Phosphoserine. Residues K139 and K155 each participate in a glycyl lysine isopeptide (Lys-Gly) (interchain with G-Cter in SUMO); alternate cross-link. Glycyl lysine isopeptide (Lys-Gly) (interchain with G-Cter in SUMO2); alternate cross-links involve residues K139 and K155. S266 carries the phosphoserine modification. K280 participates in a covalent cross-link: Glycyl lysine isopeptide (Lys-Gly) (interchain with G-Cter in ubiquitin). An NR C4-type zinc finger spans residues 282-314; sequence CLVCSDEASGCHYGVLTCGSCKVFFKRAVEGQH. A DNA-binding region (nuclear receptor) is located at residues 282 to 314; that stretch reads CLVCSDEASGCHYGVLTCGSCKVFFKRAVEGQH.

This sequence belongs to the nuclear hormone receptor family. NR3 subfamily. In terms of assembly, heteromultimeric cytoplasmic complex with HSP90AA1, HSPA1A/HSPA1B, and FKBP5 or another immunophilin such as PPID, STIP1, or the immunophilin homolog PPP5C. Upon ligand binding FKBP5 dissociates from the complex and FKBP4 takes its place, thereby linking the complex to dynein and mediating transport to the nucleus, where the complex dissociates. Probably forms a complex composed of chaperones HSP90 and HSP70, co-chaperones CDC37, PPP5C, TSC1 and client protein TSC2, CDK4, AKT, RAF1 and NR3C1; this complex does not contain co-chaperones STIP1/HOP and PTGES3/p23. Directly interacts with UNC45A. Binds to DNA as a homodimer, and as heterodimer with NR3C2 or the retinoid X receptor. Binds STAT5A and STAT5B homodimers and heterodimers. Interacts with NRIP1, POU2F1, POU2F2 and TRIM28. Interacts with several coactivator complexes, including the SMARCA4 complex, CREBBP/EP300, TADA2L (Ada complex) and p160 coactivators such as NCOA2 and NCOA6. Interaction with BAG1 inhibits transactivation. Interacts with HEXIM1 and TGFB1I1. Interacts with NCOA1. Interacts with NCOA3, SMARCA4, SMARCC1, SMARCD1, and SMARCE1. Interacts with CLOCK, CRY1 and CRY2 in a ligand-dependent fashion. Interacts with CIART. Interacts with RWDD3. Interacts with UBE2I/UBC9 and this interaction is enhanced in the presence of RWDD3. Interacts with GRIP1. Interacts with NR4A3 (via nuclear receptor DNA-binding domain), represses transcription activity of NR4A3 on the POMC promoter Nur response element (NurRE). Directly interacts with PNRC2 to attract and form a complex with UPF1 and DCP1A; the interaction leads to rapid mRNA degradation. Interacts with GSK3B. Interacts with FNIP1 and FNIP2. Interacts (via C-terminus) with HNRNPU (via C-terminus). Interacts with MCM3AP. Interacts (via domain NR LBD) with HSP90AA1 and HSP90AB1. In the absence of hormonal ligand, interacts with TACC1. Interacts (via NR LBD domain) with ZNF764 (via KRAB domain); the interaction regulates transcription factor activity of NR3C1 by directing its actions toward certain biologic pathways. In terms of processing, acetylation by CLOCK reduces its binding to glucocorticoid response elements and its transcriptional activity. Post-translationally, increased proteasome-mediated degradation in response to glucocorticoids. Phosphorylated in the absence of hormone; becomes hyperphosphorylated in the presence of glucocorticoid. The Ser-65, Ser-88 and Ser-266-phosphorylated forms are mainly cytoplasmic, and the Ser-73-phosphorylated form is nuclear. Phosphorylation at Ser-73 increases transcriptional activity. Phosphorylation at Ser-65, Ser-88 and Ser-266 decreases signaling capacity. Phosphorylation at Ser-266 may protect from glucocorticoid-induced apoptosis. Phosphorylation at Ser-65 and Ser-73 is not required in regulation of chromosome segregation. May be dephosphorylated by PPP5C, attenuates NR3C1 action. In terms of processing, ubiquitinated by UBR5, leading to its degradation: UBR5 specifically recognizes and binds ligand-bound NR3C1 when it is not associated with coactivators (NCOAs). In presence of NCOAs, the UBR5-degron is not accessible, preventing its ubiquitination and degradation. Post-translationally, sumoylation at Lys-139 and Lys-155 negatively regulates its transcriptional activity. Heat shock increases sumoylation in a RWDD3-dependent manner.

It is found in the cytoplasm. Its subcellular location is the nucleus. The protein localises to the mitochondrion. The protein resides in the cytoskeleton. It localises to the spindle. It is found in the microtubule organizing center. Its subcellular location is the centrosome. The protein localises to the chromosome. The protein resides in the nucleoplasm. In terms of biological role, receptor for glucocorticoids (GC). Has a dual mode of action: as a transcription factor that binds to glucocorticoid response elements (GRE), both for nuclear and mitochondrial DNA, and as a modulator of other transcription factors. Affects inflammatory responses, cellular proliferation and differentiation in target tissues. Involved in chromatin remodeling. Plays a role in rapid mRNA degradation by binding to the 5' UTR of target mRNAs and interacting with PNRC2 in a ligand-dependent manner which recruits the RNA helicase UPF1 and the mRNA-decapping enzyme DCP1A, leading to RNA decay. Could act as a coactivator for STAT5-dependent transcription upon growth hormone (GH) stimulation and could reveal an essential role of hepatic GR in the control of body growth. Mediates glucocorticoid-induced apoptosis. Promotes accurate chromosome segregation during mitosis. May act as a tumor suppressor. May play a negative role in adipogenesis through the regulation of lipolytic and antilipogenic gene expression. The protein is Glucocorticoid receptor (NR3C1) of Ovis aries (Sheep).